A 216-amino-acid chain; its full sequence is Ribosomal RNA large subunit methyltransferase E (216 aa).

Residues glycine 60, tryptophan 62, aspartate 80, aspartate 96, and aspartate 121 each contribute to the S-adenosyl-L-methionine site. Residue lysine 161 is the Proton acceptor of the active site.

This sequence belongs to the class I-like SAM-binding methyltransferase superfamily. RNA methyltransferase RlmE family.

The protein resides in the cytoplasm. The enzyme catalyses uridine(2552) in 23S rRNA + S-adenosyl-L-methionine = 2'-O-methyluridine(2552) in 23S rRNA + S-adenosyl-L-homocysteine + H(+). Functionally, specifically methylates the uridine in position 2552 of 23S rRNA at the 2'-O position of the ribose in the fully assembled 50S ribosomal subunit. This chain is Ribosomal RNA large subunit methyltransferase E, found in Pseudomonas fluorescens (strain SBW25).